The primary structure comprises 1072 residues: Zinc finger MIZ domain-containing protein 1 (1072 aa).

The sufficient for transactivation activity; sufficient for interaction with NOTCH1 stretch occupies residues 1-120; sequence MNSMDRHIQQ…HQKSRQNDPP (120 aa). Lysine 91 is covalently cross-linked (Glycyl lysine isopeptide (Lys-Gly) (interchain with G-Cter in SUMO2)). Disordered regions lie at residues 112-141 and 362-538; these read QKSRQNDPPGKLPMQPPLSSMSSMKPTLSH and TPSG…PYLS. Low complexity predominate over residues 128–141; the sequence is PLSSMSSMKPTLSH. Polar residues predominate over residues 419–436; the sequence is YGNQQYGPNSQFPTQPGQ. The span at 437–446 shows a compositional bias: pro residues; it reads YPTPNPPRPL. Low complexity predominate over residues 489–501; sequence SSGSSYSSYSQGS. A compositionally biased stretch (pro residues) spans 517–528; that stretch reads SPVPGNPTPPMT. Residues 734 to 815 form an SP-RING-type zinc finger; the sequence is GEDGVEQTAI…MWGILNAIQH (82 aa). Zn(2+)-binding residues include cysteine 765, histidine 767, cysteine 788, and cysteine 791. Glycyl lysine isopeptide (Lys-Gly) (interchain with G-Cter in SUMO2) cross-links involve residues lysine 841 and lysine 850. Residues 844-1072 are transactivation domain; it reads PDGIPSKRFK…DDLLSLFENN (229 aa). Over residues 875 to 886 the composition is skewed to pro residues; that stretch reads GPSPYPLPPPPG. Residues 875 to 1072 are disordered; that stretch reads GPSPYPLPPP…DDLLSLFENN (198 aa). Composition is skewed to polar residues over residues 888–902 and 958–968; these read TSSNDYSSQGNNYQG and SSDQPHPSIQQ. Pro residues predominate over residues 988–1001; sequence APPPSQPPRQPPQA. Low complexity predominate over residues 1045–1072; it reads PDELLSYLDPPDLPSNSNDDLLSLFENN.

In terms of assembly, interacts with AR, but not with ESR1, NR3C1, PGR, THRB nor VDR. Interacts with NOTCH1 and RBPJ. Interacts with SMARCA4. Interacts (via SP-RING-type domain) with SMAD3 and SMAD4 (via MH2 domain). Expressed in brain.

The protein resides in the nucleus. The protein localises to the nucleoplasm. It localises to the cytoplasm. Its function is as follows. Acts as a transcriptional coactivator. Increases ligand-dependent transcriptional activity of AR and promotes AR sumoylation. The stimulation of AR activity is dependent upon sumoylation. Also functions as a transcriptional coactivator in the TGF-beta signaling pathway by increasing the activity of the SMAD3/SMAD4 transcriptional complex. Involved in transcriptional activation of a subset of NOTCH1 target genes including MYC. Involved in thymocyte and T cell development. Involved in the regulation of postmitotic positioning of pyramidal neurons in the developing cerebral cortex. The chain is Zinc finger MIZ domain-containing protein 1 (Zmiz1) from Mus musculus (Mouse).